The following is a 305-amino-acid chain: MDNTTTTEPPKQPCTRNTLITQQIIPMLYCVVFITGVLLNGISGWIFFYVPSSKSFIIYLKNIVVADFLMGLTFPFKVLSDSGLGPWQLNVFVFRVSAVIFYVNMYVSIAFFGLISFDRYYKIVKPLLVSIVQSVNYSKVLSVLVWVLMLLLAVPNIILTNQSVKDVTNIQCMELKNELGRKWHKASNYVFVSIFWIVFLLLTVFYMAITRKIFKSHLKSRKNSISVKRKSSRNIFSIVLAFVACFAPYHVARIPYTKSQTEGHYSCQAKETLLYTKEFTLLLSAANVCLDPISISSYASRLEKS.

The Extracellular portion of the chain corresponds to 1–29 (MDNTTTTEPPKQPCTRNTLITQQIIPMLY). N-linked (GlcNAc...) asparagine glycosylation is present at asparagine 3. Residues 30-50 (CVVFITGVLLNGISGWIFFYV) form a helical membrane-spanning segment. At 51–55 (PSSKS) the chain is on the cytoplasmic side. Residues 56–76 (FIIYLKNIVVADFLMGLTFPF) form a helical membrane-spanning segment. At 77 to 96 (KVLSDSGLGPWQLNVFVFRV) the chain is on the extracellular side. Residues 97 to 117 (SAVIFYVNMYVSIAFFGLISF) traverse the membrane as a helical segment. Topologically, residues 118–139 (DRYYKIVKPLLVSIVQSVNYSK) are cytoplasmic. The chain crosses the membrane as a helical span at residues 140–160 (VLSVLVWVLMLLLAVPNIILT). Asparagine 161 carries N-linked (GlcNAc...) asparagine glycosylation. Topologically, residues 161-188 (NQSVKDVTNIQCMELKNELGRKWHKASN) are extracellular. Residues 189-209 (YVFVSIFWIVFLLLTVFYMAI) form a helical membrane-spanning segment. The Cytoplasmic segment spans residues 210 to 234 (TRKIFKSHLKSRKNSISVKRKSSRN). Residues 235–255 (IFSIVLAFVACFAPYHVARIP) traverse the membrane as a helical segment. Residues 256–278 (YTKSQTEGHYSCQAKETLLYTKE) lie on the Extracellular side of the membrane. Residues 279–299 (FTLLLSAANVCLDPISISSYA) traverse the membrane as a helical segment. Residues 300–305 (SRLEKS) lie on the Cytoplasmic side of the membrane.

It belongs to the G-protein coupled receptor 1 family.

It is found in the cell membrane. Functionally, receptor for UDP-glucose coupled to G-proteins. The chain is P2Y purinoceptor 14 (P2ry14) from Rattus norvegicus (Rat).